Reading from the N-terminus, the 251-residue chain is Gamma-glutamyl peptidase 4 (251 aa).

Positions Ser-16–Ile-213 constitute a Glutamine amidotransferase type-1 domain. Catalysis depends on Cys-100, which acts as the Nucleophile. Residues His-192 and Glu-194 contribute to the active site.

Belongs to the peptidase C26 family.

Its subcellular location is the cytoplasm. The protein resides in the cytosol. The protein operates within secondary metabolite biosynthesis. Functionally, involved in glucosinolate biosynthesis. Hydrolyzes the gamma-glutamyl peptide bond of several glutathione (GSH) conjugates to produce Cys-Gly conjugates related to glucosinolates. The gamma-Glu-Cys-Gly-GSH conjugates are the sulfur-donating molecule in glucosinolate biosynthesis. In Arabidopsis thaliana (Mouse-ear cress), this protein is Gamma-glutamyl peptidase 4.